We begin with the raw amino-acid sequence, 352 residues long: Holliday junction branch migration complex subunit RuvB (352 aa).

The interval 1–182 is large ATPase domain (RuvB-L); sequence MRIELLNTPP…FGINSRFDYY (182 aa). ATP contacts are provided by residues isoleucine 21, arginine 22, glycine 63, lysine 66, threonine 67, threonine 68, 129–131, arginine 172, tyrosine 182, and arginine 219; that span reads EDF. Threonine 67 serves as a coordination point for Mg(2+). The small ATPAse domain (RuvB-S) stretch occupies residues 183 to 253; the sequence is EPELLTRIII…IAMKTLECLE (71 aa). Residues 256 to 352 form a head domain (RuvB-H) region; the sequence is EEGLDEMDKK…LPLFDESEAD (97 aa). DNA is bound by residues arginine 292, arginine 311, and arginine 316.

Belongs to the RuvB family. In terms of assembly, homohexamer. Forms an RuvA(8)-RuvB(12)-Holliday junction (HJ) complex. HJ DNA is sandwiched between 2 RuvA tetramers; dsDNA enters through RuvA and exits via RuvB. An RuvB hexamer assembles on each DNA strand where it exits the tetramer. Each RuvB hexamer is contacted by two RuvA subunits (via domain III) on 2 adjacent RuvB subunits; this complex drives branch migration. In the full resolvosome a probable DNA-RuvA(4)-RuvB(12)-RuvC(2) complex forms which resolves the HJ.

It is found in the cytoplasm. It catalyses the reaction ATP + H2O = ADP + phosphate + H(+). In terms of biological role, the RuvA-RuvB-RuvC complex processes Holliday junction (HJ) DNA during genetic recombination and DNA repair, while the RuvA-RuvB complex plays an important role in the rescue of blocked DNA replication forks via replication fork reversal (RFR). RuvA specifically binds to HJ cruciform DNA, conferring on it an open structure. The RuvB hexamer acts as an ATP-dependent pump, pulling dsDNA into and through the RuvAB complex. RuvB forms 2 homohexamers on either side of HJ DNA bound by 1 or 2 RuvA tetramers; 4 subunits per hexamer contact DNA at a time. Coordinated motions by a converter formed by DNA-disengaged RuvB subunits stimulates ATP hydrolysis and nucleotide exchange. Immobilization of the converter enables RuvB to convert the ATP-contained energy into a lever motion, pulling 2 nucleotides of DNA out of the RuvA tetramer per ATP hydrolyzed, thus driving DNA branch migration. The RuvB motors rotate together with the DNA substrate, which together with the progressing nucleotide cycle form the mechanistic basis for DNA recombination by continuous HJ branch migration. Branch migration allows RuvC to scan DNA until it finds its consensus sequence, where it cleaves and resolves cruciform DNA. This chain is Holliday junction branch migration complex subunit RuvB, found in Chlorobium chlorochromatii (strain CaD3).